The primary structure comprises 551 residues: Putative ABC transporter ATP-binding protein BT9727_3105 (551 aa).

2 ABC transporter domains span residues 5–243 (AEIN…FRPF) and 293–525 (LSAE…SINR). Residues 39-46 (GGSGSGKT) and 327-334 (GKNGTGKS) contribute to the ATP site.

The protein belongs to the ABC transporter superfamily.

The protein localises to the cell membrane. In terms of biological role, probably part of an ABC transporter complex. Responsible for energy coupling to the transport system. In Bacillus thuringiensis subsp. konkukian (strain 97-27), this protein is Putative ABC transporter ATP-binding protein BT9727_3105.